The sequence spans 270 residues: Eukaryotic translation initiation factor 2 subunit beta (270 aa).

The tract at residues 1 to 38 is disordered; it reads MADEEQMERKEEATEIAPFDPTKKKKKKKVVIQDPADE.

The protein belongs to the eIF-2-beta/eIF-5 family. Eukaryotic translation initiation factor 2 eIF2 is a heterotrimeric complex composed of an alpha, a beta and a gamma subunit.

Its subcellular location is the cytoplasm. It is found in the cytosol. Its function is as follows. Component of the eIF2 complex that functions in the early steps of protein synthesis by forming a ternary complex with GTP and initiator tRNA. This complex binds to a 40S ribosomal subunit, followed by mRNA binding to form a 43S pre-initiation complex (43S PIC). Junction of the 60S ribosomal subunit to form the 80S initiation complex is preceded by hydrolysis of the GTP bound to eIF2 and release of an eIF2-GDP binary complex. In order for eIF2 to recycle and catalyze another round of initiation, the GDP bound to eIF2 must exchange with GTP by way of a reaction catalyzed by eIF2B. This chain is Eukaryotic translation initiation factor 2 subunit beta, found in Triticum aestivum (Wheat).